The primary structure comprises 225 residues: Uridylate kinase (225 aa).

9–10 is an ATP binding site; it reads GS. UMP is bound at residue glycine 46. Glycine 47 and arginine 51 together coordinate ATP. UMP contacts are provided by residues aspartate 67 and 115–121; that span reads THPAHTT. 4 residues coordinate ATP: threonine 141, asparagine 142, tyrosine 147, and aspartate 150.

The protein belongs to the UMP kinase family. As to quaternary structure, homohexamer.

It localises to the cytoplasm. The catalysed reaction is UMP + ATP = UDP + ADP. It participates in pyrimidine metabolism; CTP biosynthesis via de novo pathway; UDP from UMP (UMPK route): step 1/1. Inhibited by UTP. Catalyzes the reversible phosphorylation of UMP to UDP. This is Uridylate kinase from Methanococcus aeolicus (strain ATCC BAA-1280 / DSM 17508 / OCM 812 / Nankai-3).